The chain runs to 125 residues: Small ribosomal subunit protein uS12 (125 aa).

Position 89 is a 3-methylthioaspartic acid (Asp89).

Belongs to the universal ribosomal protein uS12 family. As to quaternary structure, part of the 30S ribosomal subunit. Contacts proteins S8 and S17. May interact with IF1 in the 30S initiation complex.

With S4 and S5 plays an important role in translational accuracy. Its function is as follows. Interacts with and stabilizes bases of the 16S rRNA that are involved in tRNA selection in the A site and with the mRNA backbone. Located at the interface of the 30S and 50S subunits, it traverses the body of the 30S subunit contacting proteins on the other side and probably holding the rRNA structure together. The combined cluster of proteins S8, S12 and S17 appears to hold together the shoulder and platform of the 30S subunit. This Bordetella avium (strain 197N) protein is Small ribosomal subunit protein uS12.